A 470-amino-acid polypeptide reads, in one-letter code: Monocarboxylate transporter 4 (470 aa).

Residues Met1–Asp17 lie on the Cytoplasmic side of the membrane. Residues Gly18–Phe38 form a helical membrane-spanning segment. Topologically, residues Pro39–Ala61 are extracellular. A helical membrane pass occupies residues Trp62–Val82. The Cytoplasmic segment spans residues Asn83–Arg84. The helical transmembrane segment at Phe85–Ala105 threads the bilayer. Over Ser106–Arg109 the chain is Extracellular. A helical membrane pass occupies residues Ser110 to Phe130. The Cytoplasmic portion of the chain corresponds to Gln131–Asn149. A helical membrane pass occupies residues Gly150–Leu170. Residues Gln171–Gly179 lie on the Extracellular side of the membrane. Residues Phe180–Leu200 traverse the membrane as a helical segment. Residues Val201–Gly231 are Cytoplasmic-facing. The helical transmembrane segment at Phe232–Phe252 threads the bilayer. Topologically, residues Val253–Ala267 are extracellular. The chain crosses the membrane as a helical span at residues Ala268–Ile288. Over Thr289–Ser298 the chain is Cytoplasmic. A helical transmembrane segment spans residues Val299–Ala319. At Thr320–Asp321 the chain is on the extracellular side. Residues Tyr322–Leu342 traverse the membrane as a helical segment. The Cytoplasmic portion of the chain corresponds to Gln343 to Lys355. A helical transmembrane segment spans residues Phe356–Pro376. The Extracellular segment spans residues Ser377–Val391. A helical transmembrane segment spans residues Phe392 to Phe412. Residues Cys413–Val470 are Cytoplasmic-facing. Basolateral sorting signal regions lie at residues Ala429–Arg446 and Arg446–Val470. Position 430 is a phosphoserine (Ser430). Thr465 is subject to Phosphothreonine. A Phosphoserine modification is found at Ser469.

It belongs to the major facilitator superfamily. Monocarboxylate porter (TC 2.A.1.13) family. As to quaternary structure, interacts with BSG; interaction mediates SLC16A3 targeting to the plasma membrane.

The protein resides in the cell membrane. It is found in the basolateral cell membrane. The catalysed reaction is (S)-lactate(in) + H(+)(in) = (S)-lactate(out) + H(+)(out). The enzyme catalyses pyruvate(out) + H(+)(out) = pyruvate(in) + H(+)(in). In terms of biological role, proton-dependent transporter of monocarboxylates such as L-lactate and pyruvate. Plays a predominant role in the L-lactate efflux from highly glycolytic cells. This is Monocarboxylate transporter 4 (Slc16a3) from Mus musculus (Mouse).